Here is a 33-residue protein sequence, read N- to C-terminus: Protamine-1A (33 aa).

Residues 1–33 (PRRRRSSSRPVRRRRRPRRVSRRRRRRGGRRRR) form a disordered region.

As to expression, testis.

Its subcellular location is the nucleus. The protein localises to the chromosome. In terms of biological role, protamines substitute for histones in the chromatin of sperm during the haploid phase of spermatogenesis. They compact sperm DNA into a highly condensed, stable and inactive complex. The protein is Protamine-1A of Oncorhynchus mykiss (Rainbow trout).